The sequence spans 201 residues: ATP-dependent Clp protease proteolytic subunit (201 aa).

Residue S101 is the Nucleophile of the active site. The active site involves H126.

Belongs to the peptidase S14 family. In terms of assembly, fourteen ClpP subunits assemble into 2 heptameric rings which stack back to back to give a disk-like structure with a central cavity, resembling the structure of eukaryotic proteasomes.

It localises to the cytoplasm. The catalysed reaction is Hydrolysis of proteins to small peptides in the presence of ATP and magnesium. alpha-casein is the usual test substrate. In the absence of ATP, only oligopeptides shorter than five residues are hydrolyzed (such as succinyl-Leu-Tyr-|-NHMec, and Leu-Tyr-Leu-|-Tyr-Trp, in which cleavage of the -Tyr-|-Leu- and -Tyr-|-Trp bonds also occurs).. Its function is as follows. Cleaves peptides in various proteins in a process that requires ATP hydrolysis. Has a chymotrypsin-like activity. Plays a major role in the degradation of misfolded proteins. The chain is ATP-dependent Clp protease proteolytic subunit from Francisella tularensis subsp. tularensis (strain FSC 198).